Consider the following 317-residue polypeptide: Small ribosomal subunit protein uS2 (317 aa).

S2 bears the N-acetylserine mark. Laminin-binding stretches follow at residues 161-180 (IPCN…MLAR) and 205-229 (RDPE…EFQG). 5 [DE]-W-[ST] repeats span residues 230–232 (EWS), 245–247 (DWS), 288–290 (DWS), 297–299 (DWS), and 315–317 (EWS). The segment at 242-317 (EVPDWSEGVQ…DWGGSTAEWS (76 aa)) is laminin-binding. A disordered region spans residues 278-317 (PGPTTEGYSEDWSAQPATEDWSAAPTAQAGDWGGSTAEWS).

It belongs to the universal ribosomal protein uS2 family. As to quaternary structure, monomer (37LRP) and homodimer (67LR). Component of the small ribosomal subunit. Mature ribosomes consist of a small (40S) and a large (60S) subunit. The 40S subunit contains about 33 different proteins and 1 molecule of RNA (18S). The 60S subunit contains about 49 different proteins and 3 molecules of RNA (28S, 5.8S and 5S). Interacts with rps21. Interacts with several laminins including at least lamb1. Interacts with mdk. Post-translationally, acylated. Acylation may be a prerequisite for conversion of the monomeric 37 kDa laminin receptor precursor (37LRP) to the mature dimeric 67 kDa laminin receptor (67LR), and may provide a mechanism for membrane association. In terms of processing, cleaved by stromelysin-3 (ST3) at the cell surface. Cleavage by stromelysin-3 may be a mechanism to alter cell-extracellular matrix interactions.

It is found in the cell membrane. The protein localises to the cytoplasm. The protein resides in the nucleus. Its function is as follows. Required for the assembly and/or stability of the 40S ribosomal subunit. Required for the processing of the 20S rRNA-precursor to mature 18S rRNA in a late step of the maturation of 40S ribosomal subunits. Also functions as a cell surface receptor for laminin. Plays a role in cell adhesion to the basement membrane and in the consequent activation of signaling transduction pathways. May play a role in cell fate determination and tissue morphogenesis. The protein is Small ribosomal subunit protein uS2 (rpsa) of Ictalurus punctatus (Channel catfish).